A 184-amino-acid chain; its full sequence is Cysteine-rich atrial secretory protein (184 aa).

The N-terminal stretch at 1 to 26 (MATFQAHFFAAVMCVGVLGLSKLCGA) is a signal peptide. Cystine bridges form between Cys29-Cys34, Cys65-Cys111, Cys75-Cys82, Cys123-Cys155, and Cys135-Cys144. Asn74 carries an N-linked (GlcNAc...) asparagine glycan.

In terms of processing, N-glycosylated. As to expression, highly expressed in atrium. Moderately expressed in the pericardium, pulmonary vein, nephridium, arteria anterior, ovotestis and connective tissue. Low expression found in intestine, lung plexus, diaphragm, subesophageal ganglion, ventricle and digestive gland. Very low expression found in columellar retractor, pedal nerves and cerebral ganglion. Not expressed in hemocytes.

The protein resides in the secreted. This Achatina achatina (Giant Ghana snail) protein is Cysteine-rich atrial secretory protein.